The primary structure comprises 405 residues: Lipase lipl-1 (405 aa).

The N-terminal stretch at 1–20 (MRSWSTVMLAVLATAATVFG) is a signal peptide. The N-linked (GlcNAc...) asparagine glycan is linked to Asn-66. Ser-169 serves as the catalytic Nucleophile. Residue Asn-273 is glycosylated (N-linked (GlcNAc...) asparagine). Residues Asp-344 and His-376 each act as charge relay system in the active site.

The protein belongs to the AB hydrolase superfamily. Lipase family.

Its subcellular location is the secreted. It localises to the lysosome lumen. Its function is as follows. Lipase that, together with lipl-3, plays a role in the response to nutrient deprivation by controlling lipid metabolism. Specifically, involved in the breakdown of lipids during lipophagy, a process during which lipids contained in lipid droplets that have been delivered to lysosomes by autophagy are degraded. The polypeptide is Lipase lipl-1 (Caenorhabditis elegans).